A 218-amino-acid polypeptide reads, in one-letter code: Probable GTP-binding protein EngB (218 aa).

An EngB-type G domain is found at 23-200 (EVPEIAFVGR…AQLLWQWAHP (178 aa)). GTP is bound by residues 31-38 (GRSNAGKS), 58-62 (GRTQH), 80-83 (DLPG), 150-153 (TKAD), and 179-181 (FSA). Positions 38 and 60 each coordinate Mg(2+).

Belongs to the TRAFAC class TrmE-Era-EngA-EngB-Septin-like GTPase superfamily. EngB GTPase family. The cofactor is Mg(2+).

In terms of biological role, necessary for normal cell division and for the maintenance of normal septation. The sequence is that of Probable GTP-binding protein EngB from Acidovorax ebreus (strain TPSY) (Diaphorobacter sp. (strain TPSY)).